A 118-amino-acid polypeptide reads, in one-letter code: MICOS complex subunit MIC13 (118 aa).

At 1-7 the chain is on the mitochondrial matrix side; sequence MVARVWS. A helical membrane pass occupies residues 8-26; it reads LMRFLIKGSVAGGAVYLVY. At 27–118 the chain is on the mitochondrial intermembrane side; sequence DQELLGPSDK…GWEYVKARTK (92 aa).

The protein belongs to the MICOS complex subunit Mic13 family. Component of the mitochondrial contact site and cristae organizing system (MICOS) complex, composed of at least MICOS10/MIC10, CHCHD3/MIC19, CHCHD6/MIC25, APOO/MIC26, MICOS13/MIC13, APOOL/MIC27 and IMMT/MIC60. The complex associates with mitochondrial outer membrane proteins SAMM50, MTX1 and MTX2, and with HSPA9.

The protein resides in the mitochondrion inner membrane. In terms of biological role, component of the MICOS complex, a large protein complex of the mitochondrial inner membrane that plays crucial roles in the maintenance of crista junctions, inner membrane architecture, and formation of contact sites to the outer membrane. Constituent of mature MICOS complex, it is required for the formation of cristae junction (CJ) and maintenance of cristae morphology. Required for the incorporation of MICOS10/MIC10 into the MICOS complex. This Macaca fascicularis (Crab-eating macaque) protein is MICOS complex subunit MIC13.